The sequence spans 1391 residues: CAP-Gly domain-containing linker protein 1 (1391 aa).

Positions 1–53 (MSMLKPSGLKAPTKILKPGSTALKTPAAAAAPVEKTIPSEKASGPPSSETQEE) are disordered. S48 is modified (phosphoserine). T50 carries the post-translational modification Phosphothreonine. Residues 78–120 (GETQFAPGQWAGIVLDEPIGKNDGSVAGVRYFQCEPLKGIFTR) form the CAP-Gly 1 domain. The tract at residues 97-101 (GKNDG) is important for tubulin binding. A disordered region spans residues 129–182 (QAEDEANGLQAAPGRTASPLSTAAATMVSSSPATPSNIPHKPSQSTAKEPSATP). Phosphoserine is present on S146. Positions 146–182 (SPLSTAAATMVSSSPATPSNIPHKPSQSTAKEPSATP) are enriched in polar residues. Phosphothreonine is present on T181. A phosphoserine mark is found at S194, S196, S199, and S203. A CAP-Gly 2 domain is found at 231–273 (GETDFAKGEWCGVELDEPLGKNDGAVAGTRYFQCQPKYGLFAP). Positions 302–331 (TPASLKRSPSASSLSSMSSVASSVSSKPSR) are enriched in low complexity. The disordered stretch occupies residues 302 to 336 (TPASLKRSPSASSLSSMSSVASSVSSKPSRTGLLT). S309 is modified (phosphoserine). A Phosphoserine; by PKA modification is found at S311. 3 positions are modified to phosphoserine: S314, S347, and S1189. Positions 349-1306 (TTALQEALKE…VEMMSEAALN (958 aa)) form a coiled coil. Positions 1251–1272 (KRQLSSSSGNTDAQAEEDERAQ) are disordered. Phosphoserine is present on S1317. A CCHC-type zinc finger spans residues 1370 to 1387 (PYCEICEMFGHWATNCND).

In terms of assembly, interacts with MTOR; phosphorylates and regulates CLIP1. Interacts (via CAP-Gly domains) with tubulin. Interacts with SLAIN2. Interacts with TUBA1B, MAPRE1 and MAPRE3. Interacts (via zinc finger) with DCTN1. Binds preferentially to tyrosinated microtubules, and only marginally to detyrosinated microtubules. Post-translationally, phosphorylated. Phosphorylation induces conformational changes by increasing the affinity of the N-terminus for C-terminus, resulting in inhibition of its function thus decreasing its binding to microtubules and DCTN1. Exhibits a folded, autoinhibited conformation when phosphorylated and an open conformation when dephosphorylated with increased binding affinity to microtubules and DCTN1. Phosphorylation regulates its recruitment to tyrosinated microtubules and the recruitment of vesicular cargo to microtubules in neurons. Phosphorylation by MTOR may positively regulate CLIP1 association with microtubules. As to expression, expressed in the testes (at protein level).

The protein localises to the cytoplasm. It is found in the cytoskeleton. The protein resides in the cytoplasmic vesicle membrane. It localises to the cell projection. Its subcellular location is the ruffle. Binds to the plus end of microtubules and regulates the dynamics of the microtubule cytoskeleton. Promotes microtubule growth and microtubule bundling. Links cytoplasmic vesicles to microtubules and thereby plays an important role in intracellular vesicle trafficking. Plays a role macropinocytosis and endosome trafficking. This Mus musculus (Mouse) protein is CAP-Gly domain-containing linker protein 1 (Clip1).